The sequence spans 881 residues: MGCLKNQLLIAILLLSVYGIYCTQYVTVFYGVPAWRNATIPLFCATKNRDTWGTTQCLPDNGDYSELALNVTESFDAWENTVTEQAIEDVWQLFETSIKPCVKLSPLCITMRCNKSETDRWGLTKSSTTITTAAPTSAPVSEKLDMVNETSSCIAQNNCTGLEQEQMISCKFNMTGLKRDKTKEYNETWYSTDLVCEQRNSTDNESRCYMNHCNTSVIQESCDKHYWDTIRFRYCAPPGYALLRCNDTNYSGFMPKCSKVVVSSCTRMMETQTSTWFGFNGTRAENRTYIYWHGRDNRTIISLNKYYNLTMKCRRPGNKTVLPVTIMSELVFHSQPINDRPKQAWCWFGGKWKDAIKEVKQTIVKHPRYTGTNNTDKINLTAPGGGDPEVTFMWTNCRGEFLYCKMNWFLNWVEDKDVTTQRPKERHRKNYVPCHIRQIINTWHKVGKNVYLPPREGDLTCNSTVTSLIANIDWTDGNQTSITMSAEVAELYRLELGDYKLVEITPIGLAPTDVKRYTTGGTSRNKRGVFVLGFLGFLATAGSAIGAVVVDVTAQSRTLLAGIVQQQQQLLDVVKRQQELLRLTVWGTKNLQTKVTAIEKYLKDQAQLNAWGCAFRQVCHITVPWPNASLTPDWNNDTWQEWERKVDFLEENITALLEEAQIQQEKNMYKLQKLNSWDVFGNWFDLASWIKYIQYGIYVVVGVILLRIVIYIVQMLAKLRQGYRPVFSSPPSYFQXTHTQQDPALPTREGKEGDGGEGGGNSSWPWQIEYIHFLIRQLIRLLTWLFSNCRTLLSRAYQILQPILQRLSATLRRIREVLRTELTYLQYGWSYFHEAVQAGWRSATETLAGAWGDLWETLRRGGRWILAIPRRIRQGLELTLL.

An N-terminal signal peptide occupies residues 1-22 (MGCLKNQLLIAILLLSVYGIYC). Residues 23 to 696 (TQYVTVFYGV…ASWIKYIQYG (674 aa)) are Extracellular-facing. An N-linked (GlcNAc...) asparagine; by host glycan is attached at Asn-37. Residues Cys-44 and Cys-57 are joined by a disulfide bond. N-linked (GlcNAc...) asparagine; by host glycosylation is found at Asn-70, Asn-114, Asn-148, Asn-158, Asn-173, Asn-186, Asn-200, Asn-204, Asn-214, Asn-246, Asn-249, Asn-280, Asn-286, Asn-297, Asn-308, Asn-318, Asn-373, and Asn-379. Disulfide bonds link Cys-101/Cys-222, Cys-108/Cys-213, Cys-113/Cys-170, Cys-235/Cys-265, and Cys-245/Cys-257. Residues 113 to 169 (CNKSETDRWGLTKSSTTITTAAPTSAPVSEKLDMVNETSSCIAQNNCTGLEQEQMIS) form a V1 region. The V2 stretch occupies residues 170–213 (CKFNMTGLKRDKTKEYNETWYSTDLVCEQRNSTDNESRCYMNHC). The tract at residues 313-345 (CRRPGNKTVLPVTIMSELVFHSQPINDRPKQAW) is V3. Cys-313 and Cys-346 are oxidised to a cystine. Intrachain disulfides connect Cys-397–Cys-461 and Cys-404–Cys-434. Positions 404 to 434 (CKMNWFLNWVEDKDVTTQRPKERHRKNYVPC) are V4. N-linked (GlcNAc...) asparagine; by host glycosylation is found at Asn-462 and Asn-478. A V5 region spans residues 477-484 (GNQTSITM). A fusion peptide region spans residues 528–548 (GVFVLGFLGFLATAGSAIGAV). Residues 591 to 607 (LQTKVTAIEKYLKDQAQ) are immunosuppression. Asn-627, Asn-636, and Asn-652 each carry an N-linked (GlcNAc...) asparagine; by host glycan. A coiled-coil region spans residues 636 to 668 (NDTWQEWERKVDFLEENITALLEEAQIQQEKNM). The MPER; binding to GalCer stretch occupies residues 673–694 (KLNSWDVFGNWFDLASWIKYIQ). Residues 697–717 (IYVVVGVILLRIVIYIVQMLA) traverse the membrane as a helical segment. Residues 718–881 (KLRQGYRPVF…IRQGLELTLL (164 aa)) lie on the Cytoplasmic side of the membrane. A YXXV motif; contains endocytosis signal motif is present at residues 723-726 (YRPV). The interval 737–761 (THTQQDPALPTREGKEGDGGEGGGN) is disordered. The S-palmitoyl cysteine; by host moiety is linked to residue Cys-789. A Di-leucine internalization motif motif is present at residues 880–881 (LL).

As to quaternary structure, the mature envelope protein (Env) consists of a homotrimer of non-covalently associated gp120-gp41 heterodimers. The resulting complex protrudes from the virus surface as a spike. Interacts with host CD4 and CCR5. Gp120 also interacts with the C-type lectins CD209/DC-SIGN and CLEC4M/DC-SIGNR (collectively referred to as DC-SIGN(R)). The mature envelope protein (Env) consists of a homotrimer of non-covalently associated gp120-gp41 heterodimers. The resulting complex protrudes from the virus surface as a spike. Specific enzymatic cleavages in vivo yield mature proteins. Envelope glycoproteins are synthesized as an inactive precursor that is heavily N-glycosylated and processed likely by host cell furin in the Golgi to yield the mature SU and TM proteins. The cleavage site between SU and TM requires the minimal sequence [KR]-X-[KR]-R. Post-translationally, palmitoylation of the transmembrane protein and of Env polyprotein (prior to its proteolytic cleavage) is essential for their association with host cell membrane lipid rafts. Palmitoylation is therefore required for envelope trafficking to classical lipid rafts, but not for viral replication.

The protein localises to the virion membrane. Its subcellular location is the host cell membrane. The protein resides in the host endosome membrane. Functionally, the surface protein gp120 (SU) attaches the virus to the host lymphoid cell by binding to the primary receptor CD4. This interaction induces a structural rearrangement creating a high affinity binding site for a chemokine coreceptor like CCR5. This peculiar 2 stage receptor-interaction strategy allows gp120 to maintain the highly conserved coreceptor-binding site in a cryptic conformation, protected from neutralizing antibodies. These changes are transmitted to the transmembrane protein gp41 and are thought to activate its fusogenic potential by unmasking its fusion peptide. Surface protein gp120 (SU) may target the virus to gut-associated lymphoid tissue (GALT) by binding host ITGA4/ITGB7 (alpha-4/beta-7 integrins), a complex that mediates T-cell migration to the GALT. Interaction between gp120 and ITGA4/ITGB7 would allow the virus to enter GALT early in the infection, infecting and killing most of GALT's resting CD4+ T-cells. This T-cell depletion is believed to be the major insult to the host immune system leading to AIDS. Its function is as follows. The surface protein gp120 is a ligand for CD209/DC-SIGN and CLEC4M/DC-SIGNR, which are respectively found on dendritic cells (DCs), and on endothelial cells of liver sinusoids and lymph node sinuses. These interactions allow capture of viral particles at mucosal surfaces by these cells and subsequent transmission to permissive cells. DCs are professional antigen presenting cells, critical for host immunity by inducing specific immune responses against a broad variety of pathogens. They act as sentinels in various tissues where they take up antigen, process it, and present it to T-cells following migration to lymphoid organs. SIV subverts the migration properties of dendritic cells to gain access to CD4+ T-cells in lymph nodes. Virus transmission to permissive T-cells occurs either in trans (without DCs infection, through viral capture and transmission), or in cis (following DCs productive infection, through the usual CD4-gp120 interaction), thereby inducing a robust infection. In trans infection, bound virions remain infectious over days and it is proposed that they are not degraded, but protected in non-lysosomal acidic organelles within the DCs close to the cell membrane thus contributing to the viral infectious potential during DCs' migration from the periphery to the lymphoid tissues. On arrival at lymphoid tissues, intact virions recycle back to DCs' cell surface allowing virus transmission to CD4+ T-cells. Virion capture also seems to lead to MHC-II-restricted viral antigen presentation, and probably to the activation of SIV-specific CD4+ cells. In terms of biological role, the transmembrane protein gp41 (TM) acts as a class I viral fusion protein. Under the current model, the protein has at least 3 conformational states: pre-fusion native state, pre-hairpin intermediate state, and post-fusion hairpin state. During fusion of viral and target intracellular membranes, the coiled coil regions (heptad repeats) assume a trimer-of-hairpins structure, positioning the fusion peptide in close proximity to the C-terminal region of the ectodomain. The formation of this structure appears to drive apposition and subsequent fusion of viral and target cell membranes. Complete fusion occurs in host cell endosomes. The virus undergoes clathrin-dependent internalization long before endosomal fusion, thus minimizing the surface exposure of conserved viral epitopes during fusion and reducing the efficacy of inhibitors targeting these epitopes. Membranes fusion leads to delivery of the nucleocapsid into the cytoplasm. Functionally, the envelope glycoprotein gp160 precursor down-modulates cell surface CD4 antigen by interacting with it in the endoplasmic reticulum and blocking its transport to the cell surface. The gp120-gp41 heterodimer allows rapid transcytosis of the virus through CD4 negative cells such as simple epithelial monolayers of the intestinal, rectal and endocervical epithelial barriers. Both gp120 and gp41 specifically recognize glycosphingolipids galactosyl-ceramide (GalCer) or 3' sulfo-galactosyl-ceramide (GalS) present in the lipid rafts structures of epithelial cells. Binding to these alternative receptors allows the rapid transcytosis of the virus through the epithelial cells. This transcytotic vesicle-mediated transport of virions from the apical side to the basolateral side of the epithelial cells does not involve infection of the cells themselves. The chain is Envelope glycoprotein gp160 (env) from Simian immunodeficiency virus (isolate K78) (SIV-mac).